Reading from the N-terminus, the 398-residue chain is Argininosuccinate synthase (398 aa).

An ATP-binding site is contributed by 9–17 (AYSGGLDTS). Tyrosine 85 is an L-citrulline binding site. Glycine 115 lines the ATP pocket. Residues threonine 117, asparagine 121, and aspartate 122 each contribute to the L-aspartate site. L-citrulline is bound at residue asparagine 121. The L-citrulline site is built by arginine 125, serine 173, glutamate 258, and tyrosine 270.

This sequence belongs to the argininosuccinate synthase family. Type 1 subfamily. As to quaternary structure, homotetramer.

It is found in the cytoplasm. It catalyses the reaction L-citrulline + L-aspartate + ATP = 2-(N(omega)-L-arginino)succinate + AMP + diphosphate + H(+). Its pathway is amino-acid biosynthesis; L-arginine biosynthesis; L-arginine from L-ornithine and carbamoyl phosphate: step 2/3. This is Argininosuccinate synthase from Streptococcus pneumoniae (strain ATCC BAA-255 / R6).